Here is a 123-residue protein sequence, read N- to C-terminus: Ferredoxin-5 (123 aa).

The region spanning 2 to 119 is the 2Fe-2S ferredoxin-type domain; sequence PNITFTSPIM…DVMVHFTGTP (118 aa). C42, C47, C50, and C102 together coordinate [2Fe-2S] cluster.

Belongs to the 2Fe2S plant-type ferredoxin family. [2Fe-2S] cluster is required as a cofactor.

In terms of biological role, ferredoxins are iron-sulfur proteins that transfer electrons in a wide variety of metabolic reactions. This ferredoxin probably participates in nitrogen fixation. This chain is Ferredoxin-5 (fdxD), found in Rhodobacter capsulatus (Rhodopseudomonas capsulata).